Consider the following 583-residue polypeptide: Aspartate--tRNA ligase (583 aa).

E173 contacts L-aspartate. The segment at Q197–K200 is aspartate. R219 serves as a coordination point for L-aspartate. ATP contacts are provided by residues R219–E221 and Q228. L-aspartate is bound at residue H444. E478 serves as a coordination point for ATP. L-aspartate is bound at residue R485. An ATP-binding site is contributed by G530–R533.

The protein belongs to the class-II aminoacyl-tRNA synthetase family. Type 1 subfamily. As to quaternary structure, homodimer.

The protein resides in the cytoplasm. The catalysed reaction is tRNA(Asp) + L-aspartate + ATP = L-aspartyl-tRNA(Asp) + AMP + diphosphate. Functionally, catalyzes the attachment of L-aspartate to tRNA(Asp) in a two-step reaction: L-aspartate is first activated by ATP to form Asp-AMP and then transferred to the acceptor end of tRNA(Asp). This is Aspartate--tRNA ligase from Azobacteroides pseudotrichonymphae genomovar. CFP2.